Here is a 420-residue protein sequence, read N- to C-terminus: UDP-N-acetylglucosamine 1-carboxyvinyltransferase (420 aa).

Phosphoenolpyruvate is bound at residue 22–23; sequence KN. Arg91 lines the UDP-N-acetyl-alpha-D-glucosamine pocket. Cys115 functions as the Proton donor in the catalytic mechanism. 2-(S-cysteinyl)pyruvic acid O-phosphothioketal is present on Cys115. Residues 120 to 124, 160 to 163, Asp305, and Ile327 each bind UDP-N-acetyl-alpha-D-glucosamine; these read RPVDL and KVSV.

The protein belongs to the EPSP synthase family. MurA subfamily.

The protein localises to the cytoplasm. The catalysed reaction is phosphoenolpyruvate + UDP-N-acetyl-alpha-D-glucosamine = UDP-N-acetyl-3-O-(1-carboxyvinyl)-alpha-D-glucosamine + phosphate. It functions in the pathway cell wall biogenesis; peptidoglycan biosynthesis. Its function is as follows. Cell wall formation. Adds enolpyruvyl to UDP-N-acetylglucosamine. The protein is UDP-N-acetylglucosamine 1-carboxyvinyltransferase of Pectobacterium atrosepticum (strain SCRI 1043 / ATCC BAA-672) (Erwinia carotovora subsp. atroseptica).